The chain runs to 549 residues: Cytoplasmic trehalase (549 aa).

Residues R168, 175–176 (WD), N212, 221–223 (RSQ), 292–294 (RDE), and G324 each bind substrate. Catalysis depends on proton donor/acceptor residues D326 and E509. E525 is a binding site for substrate.

Belongs to the glycosyl hydrolase 37 family. As to quaternary structure, monomer.

Its subcellular location is the cytoplasm. The enzyme catalyses alpha,alpha-trehalose + H2O = alpha-D-glucose + beta-D-glucose. It participates in glycan degradation; trehalose degradation; D-glucose from alpha,alpha-trehalose: step 1/1. Functionally, hydrolyzes trehalose to glucose. Could be involved, in cells returning to low osmolarity conditions, in the utilization of the accumulated cytoplasmic trehalose, which was synthesized in response to high osmolarity. The protein is Cytoplasmic trehalase of Salmonella choleraesuis (strain SC-B67).